We begin with the raw amino-acid sequence, 114 residues long: DNA-directed RNA polymerase subunit Rpo4 (114 aa).

It belongs to the eukaryotic RPB4 RNA polymerase subunit family. As to quaternary structure, part of the 13-subunit RNA polymerase complex. Forms a stalk with Rpo7 that extends from the main structure. In terms of processing, in purified enzyme appears as 5 forms, each differing by about 200 Da of a covalently bound, negatively charged residue. Not glycosylated.

The protein resides in the cytoplasm. The catalysed reaction is RNA(n) + a ribonucleoside 5'-triphosphate = RNA(n+1) + diphosphate. Functionally, DNA-dependent RNA polymerase catalyzes the transcription of DNA into RNA using the four ribonucleoside triphosphates as substrates. This subunit is less well bound than the others. Probably not involved in transcription initiation. The protein is DNA-directed RNA polymerase subunit Rpo4 of Sulfolobus acidocaldarius (strain ATCC 33909 / DSM 639 / JCM 8929 / NBRC 15157 / NCIMB 11770).